A 1158-amino-acid chain; its full sequence is ATP-dependent helicase/deoxyribonuclease subunit B (1158 aa).

The 275-residue stretch at 1 to 275 folds into the UvrD-like helicase ATP-binding domain; the sequence is MTLHAYLGRA…QYFNQLYRFN (275 aa). 8–15 provides a ligand contact to ATP; the sequence is GRAGTGKS. One can recognise a UvrD-like helicase C-terminal domain in the interval 269–583; it reads NQLYRFNNQD…SIGTMDLAKV (315 aa). Residues Cys-784, Cys-1112, Cys-1115, and Cys-1121 each contribute to the [4Fe-4S] cluster site.

Belongs to the helicase family. AddB/RexB type 1 subfamily. As to quaternary structure, heterodimer of AddA and AddB. Mg(2+) serves as cofactor. It depends on [4Fe-4S] cluster as a cofactor.

In terms of biological role, the heterodimer acts as both an ATP-dependent DNA helicase and an ATP-dependent, dual-direction single-stranded exonuclease. Recognizes the chi site generating a DNA molecule suitable for the initiation of homologous recombination. The AddB subunit has 5' -&gt; 3' nuclease activity but not helicase activity. This is ATP-dependent helicase/deoxyribonuclease subunit B from Staphylococcus aureus (strain MW2).